A 264-amino-acid chain; its full sequence is Type III pantothenate kinase (264 aa).

6–13 (DVRNTSIE) is a binding site for ATP. 109–112 (GADR) serves as a coordination point for substrate. Residue Asp-111 is the Proton acceptor of the active site. Position 131 (Asp-131) interacts with K(+). Thr-134 provides a ligand contact to ATP. Residue Thr-185 coordinates substrate.

This sequence belongs to the type III pantothenate kinase family. In terms of assembly, homodimer. It depends on NH4(+) as a cofactor. The cofactor is K(+).

The protein resides in the cytoplasm. It carries out the reaction (R)-pantothenate + ATP = (R)-4'-phosphopantothenate + ADP + H(+). The protein operates within cofactor biosynthesis; coenzyme A biosynthesis; CoA from (R)-pantothenate: step 1/5. In terms of biological role, catalyzes the phosphorylation of pantothenate (Pan), the first step in CoA biosynthesis. The chain is Type III pantothenate kinase from Nocardia farcinica (strain IFM 10152).